Here is a 230-residue protein sequence, read N- to C-terminus: LexA repressor (230 aa).

Residues 28–48 (LREIGAHMGIRSTNGVNDHLR) constitute a DNA-binding region (H-T-H motif). Residues Ser149 and Lys186 each act as for autocatalytic cleavage activity in the active site.

This sequence belongs to the peptidase S24 family. Homodimer.

The enzyme catalyses Hydrolysis of Ala-|-Gly bond in repressor LexA.. Represses a number of genes involved in the response to DNA damage (SOS response), including recA and lexA. In the presence of single-stranded DNA, RecA interacts with LexA causing an autocatalytic cleavage which disrupts the DNA-binding part of LexA, leading to derepression of the SOS regulon and eventually DNA repair. The polypeptide is LexA repressor (Sorangium cellulosum (strain So ce56) (Polyangium cellulosum (strain So ce56))).